Here is a 185-residue protein sequence, read N- to C-terminus: Isopentenyl-diphosphate Delta-isomerase (185 aa).

Mn(2+) contacts are provided by histidine 27 and histidine 34. The region spanning 32 to 168 is the Nudix hydrolase domain; that stretch reads PLHLAFSCHL…PWAFSPWLTL (137 aa). Cysteine 69 is a catalytic residue. Residue cysteine 69 coordinates Mg(2+). Histidine 71 provides a ligand contact to Mn(2+). Glutamate 89 is a Mg(2+) binding site. Residues glutamate 118 and glutamate 120 each coordinate Mn(2+). Glutamate 120 is an active-site residue.

This sequence belongs to the IPP isomerase type 1 family. Mg(2+) serves as cofactor. Mn(2+) is required as a cofactor.

The protein resides in the cytoplasm. It catalyses the reaction isopentenyl diphosphate = dimethylallyl diphosphate. It functions in the pathway isoprenoid biosynthesis; dimethylallyl diphosphate biosynthesis; dimethylallyl diphosphate from isopentenyl diphosphate: step 1/1. Catalyzes the 1,3-allylic rearrangement of the homoallylic substrate isopentenyl (IPP) to its highly electrophilic allylic isomer, dimethylallyl diphosphate (DMAPP). This chain is Isopentenyl-diphosphate Delta-isomerase, found in Leifsonia xyli subsp. xyli (strain CTCB07).